Here is a 224-residue protein sequence, read N- to C-terminus: Lipoprotein-releasing system ATP-binding protein LolD (224 aa).

The ABC transporter domain occupies 4 to 224; that stretch reads YTAKDISKNY…TLLDGSLQEE (221 aa). 40–47 is an ATP binding site; that stretch reads GASGSGKT.

It belongs to the ABC transporter superfamily. Lipoprotein translocase (TC 3.A.1.125) family. As to quaternary structure, the complex is composed of two ATP-binding proteins (LolD) and two transmembrane proteins (LolC and LolE).

It is found in the cell inner membrane. Its function is as follows. Part of the ABC transporter complex LolCDE involved in the translocation of mature outer membrane-directed lipoproteins, from the inner membrane to the periplasmic chaperone, LolA. Responsible for the formation of the LolA-lipoprotein complex in an ATP-dependent manner. The chain is Lipoprotein-releasing system ATP-binding protein LolD from Desulfotalea psychrophila (strain LSv54 / DSM 12343).